We begin with the raw amino-acid sequence, 546 residues long: Peptidoglycan transport ATP-binding protein YejF (546 aa).

2 consecutive ABC transporter domains span residues 12 to 261 and 291 to 530; these read VRDL…RHLL and IKAG…KALL. ATP contacts are provided by residues 46-53 and 323-330; these read GESGSGKS and GESGSGKT.

The protein belongs to the ABC transporter superfamily. In terms of assembly, the complex is composed of one ATP-binding protein (YejF), two transmembrane proteins (YejB and YejE) and a solute-binding protein (YepA or YejA).

It localises to the cell inner membrane. Part of the ABC transporter complex YejBEF-YepA involved in the uptake of muropeptides, the breakdown products of cell wall peptidoglycan. The import of muropeptides into the cell enables peptidoglycan recycling, which is vital for cell wall integrity in this bacterium. Is also probably part of the ABC transporter complex YejABEF, which is likely involved in broad-spectrum peptide import. Responsible for energy coupling to the transport system. This Agrobacterium fabrum (strain C58 / ATCC 33970) (Agrobacterium tumefaciens (strain C58)) protein is Peptidoglycan transport ATP-binding protein YejF.